A 218-amino-acid chain; its full sequence is MADEVILLDFWASMFGMRTRIALAEKRVKYDHREEDLWNKSSLLLEMNPVHKKIPVLIHNGKPVCESLIQIEYIDETWPDNNPLLPSDPYKRAHAKFWADFIDKKVNVTARRIWAVKGEEQEAAKELIEILKTLESELGDKKYFGDETFGYVDIALIGFHSWFAVYEKFGNVSIESECSKLVAWAKRCLERESVAKALPESEKVITFISERRKKLGLE.

The 80-residue stretch at 3-82 (DEVILLDFWA…YIDETWPDNN (80 aa)) folds into the GST N-terminal domain. Residues 13 to 14 (SM), 39 to 40 (NK), 53 to 54 (KI), and 66 to 67 (ES) contribute to the glutathione site. The 128-residue stretch at 88-215 (DPYKRAHAKF…TFISERRKKL (128 aa)) folds into the GST C-terminal domain. Phosphothreonine is present on threonine 148.

This sequence belongs to the GST superfamily. Tau family.

It localises to the cytoplasm. Its subcellular location is the cytosol. The catalysed reaction is RX + glutathione = an S-substituted glutathione + a halide anion + H(+). In terms of biological role, may be involved in the conjugation of reduced glutathione to a wide number of exogenous and endogenous hydrophobic electrophiles and have a detoxification role against certain herbicides. In Arabidopsis thaliana (Mouse-ear cress), this protein is Glutathione S-transferase U24 (GSTU24).